The primary structure comprises 235 residues: Sugar fermentation stimulation protein homolog (235 aa).

Belongs to the SfsA family.

This Aliivibrio fischeri (strain MJ11) (Vibrio fischeri) protein is Sugar fermentation stimulation protein homolog.